The primary structure comprises 202 residues: Acireductone dioxygenase (202 aa).

H110, H112, E116, and H154 together coordinate Fe(2+). H110, H112, E116, and H154 together coordinate Ni(2+).

The protein belongs to the acireductone dioxygenase (ARD) family. As to quaternary structure, monomer. It depends on Fe(2+) as a cofactor. Ni(2+) is required as a cofactor.

The enzyme catalyses 1,2-dihydroxy-5-(methylsulfanyl)pent-1-en-3-one + O2 = 3-(methylsulfanyl)propanoate + CO + formate + 2 H(+). It carries out the reaction 1,2-dihydroxy-5-(methylsulfanyl)pent-1-en-3-one + O2 = 4-methylsulfanyl-2-oxobutanoate + formate + 2 H(+). It participates in amino-acid biosynthesis; L-methionine biosynthesis via salvage pathway; L-methionine from S-methyl-5-thio-alpha-D-ribose 1-phosphate: step 5/6. Its function is as follows. Catalyzes 2 different reactions between oxygen and the acireductone 1,2-dihydroxy-3-keto-5-methylthiopentene (DHK-MTPene) depending upon the metal bound in the active site. Fe-containing acireductone dioxygenase (Fe-ARD) produces formate and 2-keto-4-methylthiobutyrate (KMTB), the alpha-ketoacid precursor of methionine in the methionine recycle pathway. Ni-containing acireductone dioxygenase (Ni-ARD) produces methylthiopropionate, carbon monoxide and formate, and does not lie on the methionine recycle pathway. The chain is Acireductone dioxygenase from Synechococcus sp. (strain CC9311).